Consider the following 92-residue polypeptide: CRISPR-associated endoribonuclease Cas2 1 (92 aa).

D10 serves as a coordination point for Mg(2+).

It belongs to the CRISPR-associated endoribonuclease Cas2 protein family. In terms of assembly, homodimer, forms a heterotetramer with a Cas1 homodimer. Requires Mg(2+) as cofactor.

In terms of biological role, CRISPR (clustered regularly interspaced short palindromic repeat), is an adaptive immune system that provides protection against mobile genetic elements (viruses, transposable elements and conjugative plasmids). CRISPR clusters contain sequences complementary to antecedent mobile elements and target invading nucleic acids. CRISPR clusters are transcribed and processed into CRISPR RNA (crRNA). Functions as a ssRNA-specific endoribonuclease. Involved in the integration of spacer DNA into the CRISPR cassette. The polypeptide is CRISPR-associated endoribonuclease Cas2 1 (Thermodesulfovibrio yellowstonii (strain ATCC 51303 / DSM 11347 / YP87)).